A 541-amino-acid polypeptide reads, in one-letter code: Beta-glucuronidase (541 aa).

A signal peptide spans 1-20 (MHHHPITLLSLLLGAAQSIA). Residues asparagine 69, asparagine 115, and asparagine 157 are each glycosylated (N-linked (GlcNAc...) asparagine). The active-site Proton donor is the glutamate 208. Asparagine 217, asparagine 291, and asparagine 304 each carry an N-linked (GlcNAc...) asparagine glycan. Glutamate 324 functions as the Nucleophile in the catalytic mechanism. N-linked (GlcNAc...) asparagine glycans are attached at residues asparagine 380, asparagine 426, asparagine 441, asparagine 483, and asparagine 512.

It belongs to the glycosyl hydrolase 79 family. In terms of processing, N-glycosylated.

The protein localises to the secreted. It catalyses the reaction a beta-D-glucuronoside + H2O = D-glucuronate + an alcohol. Beta-glucuronidase that hydrolyzes beta-glucuronosyl and 4-O-methyl-beta-glucuronosyl residues of arabinogalactan-protein. Hydrolyzed heparan sulfate only very weakly. Has no activity on xylan from birchwood. Able to catalyze the transglycosylation of glucuronic acid (GlcA) residues from p-nitrophenyl-beta-glucuronic acid (PNP beta-GlcA) to various monosaccharide acceptors such as glucose, galactose and xylose. The sequence is that of Beta-glucuronidase from Aspergillus niger (strain ATCC MYA-4892 / CBS 513.88 / FGSC A1513).